The sequence spans 297 residues: Probable endonuclease 4 (297 aa).

Zn(2+) contacts are provided by H69, H110, E145, D179, H182, H214, D227, H229, and E259.

Belongs to the AP endonuclease 2 family. Zn(2+) serves as cofactor.

The enzyme catalyses Endonucleolytic cleavage to 5'-phosphooligonucleotide end-products.. Functionally, endonuclease IV plays a role in DNA repair. It cleaves phosphodiester bonds at apurinic or apyrimidinic (AP) sites, generating a 3'-hydroxyl group and a 5'-terminal sugar phosphate. This chain is Probable endonuclease 4, found in Listeria welshimeri serovar 6b (strain ATCC 35897 / DSM 20650 / CCUG 15529 / CIP 8149 / NCTC 11857 / SLCC 5334 / V8).